The following is a 949-amino-acid chain: Protein translocase subunit SecA (949 aa).

Residues Gln87, 105 to 109, and Asp524 contribute to the ATP site; that span reads GEGKT. Disordered regions lie at residues 852–876 and 896–939; these read PPPG…SSGG and LEFS…GSGK. Zn(2+) contacts are provided by Cys933, Cys935, Cys944, and His945.

It belongs to the SecA family. In terms of assembly, monomer and homodimer. Part of the essential Sec protein translocation apparatus which comprises SecA, SecYEG and auxiliary proteins SecDF-YajC and YidC. Zn(2+) is required as a cofactor.

The protein localises to the cell inner membrane. It localises to the cytoplasm. It catalyses the reaction ATP + H2O + cellular proteinSide 1 = ADP + phosphate + cellular proteinSide 2.. In terms of biological role, part of the Sec protein translocase complex. Interacts with the SecYEG preprotein conducting channel. Has a central role in coupling the hydrolysis of ATP to the transfer of proteins into and across the cell membrane, serving both as a receptor for the preprotein-SecB complex and as an ATP-driven molecular motor driving the stepwise translocation of polypeptide chains across the membrane. In Methylocella silvestris (strain DSM 15510 / CIP 108128 / LMG 27833 / NCIMB 13906 / BL2), this protein is Protein translocase subunit SecA.